Reading from the N-terminus, the 311-residue chain is Putative dihydroorotate dehydrogenase A (fumarate) (311 aa).

Substrate contacts are provided by residues Lys45, 69 to 73, and Asn128; that span reads NSMGL. 45 to 46 provides a ligand contact to FMN; sequence KT. Residue Asn128 participates in FMN binding. The active-site Nucleophile is Cys131. Residues Lys165 and Val193 each coordinate FMN. 194–195 contributes to the substrate binding site; that stretch reads NS. FMN contacts are provided by residues Gly220, 248–249, and 270–271; these read GG and GT.

It belongs to the dihydroorotate dehydrogenase family. Type 1 subfamily. Homodimer. FMN serves as cofactor.

It localises to the cytoplasm. It carries out the reaction (S)-dihydroorotate + fumarate = orotate + succinate. The protein operates within pyrimidine metabolism; UMP biosynthesis via de novo pathway. Catalyzes the conversion of dihydroorotate to orotate with fumarate as the electron acceptor. The chain is Putative dihydroorotate dehydrogenase A (fumarate) (pyrD) from Streptococcus pyogenes serotype M3 (strain SSI-1).